A 294-amino-acid polypeptide reads, in one-letter code: Elongation factor Ts (294 aa).

Residues 80–83 (TDFV) form an involved in Mg(2+) ion dislocation from EF-Tu region.

The protein belongs to the EF-Ts family.

It is found in the cytoplasm. Functionally, associates with the EF-Tu.GDP complex and induces the exchange of GDP to GTP. It remains bound to the aminoacyl-tRNA.EF-Tu.GTP complex up to the GTP hydrolysis stage on the ribosome. This Polynucleobacter asymbioticus (strain DSM 18221 / CIP 109841 / QLW-P1DMWA-1) (Polynucleobacter necessarius subsp. asymbioticus) protein is Elongation factor Ts.